Consider the following 300-residue polypeptide: Transcription elongation factor A protein 2 (300 aa).

One can recognise a TFIIS N-terminal domain in the interval 6–83; it reads EEIARIARRL…KSWKKLLDAS (78 aa). Lys-58 is covalently cross-linked (Glycyl lysine isopeptide (Lys-Gly) (interchain with G-Cter in ubiquitin)). Phosphoserine is present on residues Ser-60 and Ser-101. The disordered stretch occupies residues 84 to 131; sequence DAKARERRRGGSLPTSSSKEASEAQDPSRKRPELPRMPSTPRITTFPP. Residues 103 to 117 are compositionally biased toward basic and acidic residues; that stretch reads EASEAQDPSRKRPEL. One can recognise a TFIIS central domain in the interval 139-255; it reads VRTKCREMLT…EHQMARTGGT (117 aa). The segment at 258–298 adopts a TFIIS-type zinc-finger fold; the sequence is DLFTCGKCRKKNCTYTQVQTRSSDEPMTTFVVCNECGNRWK. Positions 262, 265, 290, and 293 each coordinate Zn(2+).

The protein belongs to the TFS-II family. As to quaternary structure, interacts with the basal transcription factor GTF2B. Interacts with REXO1.

It is found in the nucleus. Its function is as follows. Necessary for efficient RNA polymerase II transcription elongation past template-encoded arresting sites. The arresting sites in DNA have the property of trapping a certain fraction of elongating RNA polymerases that pass through, resulting in locked ternary complexes. Cleavage of the nascent transcript by S-II allows the resumption of elongation from the new 3'-terminus. The chain is Transcription elongation factor A protein 2 (TCEA2) from Bos taurus (Bovine).